A 361-amino-acid chain; its full sequence is Chorismate synthase (361 aa).

NADP(+) contacts are provided by Arg-48 and Arg-54. FMN is bound by residues 125–127, 238–239, Gly-278, 293–297, and Arg-319; these read RSS, NA, and KPTSS.

It belongs to the chorismate synthase family. Homotetramer. The cofactor is FMNH2.

The catalysed reaction is 5-O-(1-carboxyvinyl)-3-phosphoshikimate = chorismate + phosphate. It participates in metabolic intermediate biosynthesis; chorismate biosynthesis; chorismate from D-erythrose 4-phosphate and phosphoenolpyruvate: step 7/7. Its function is as follows. Catalyzes the anti-1,4-elimination of the C-3 phosphate and the C-6 proR hydrogen from 5-enolpyruvylshikimate-3-phosphate (EPSP) to yield chorismate, which is the branch point compound that serves as the starting substrate for the three terminal pathways of aromatic amino acid biosynthesis. This reaction introduces a second double bond into the aromatic ring system. This chain is Chorismate synthase, found in Klebsiella pneumoniae (strain 342).